The sequence spans 178 residues: UPF0228 protein MA_4223 (178 aa).

Belongs to the UPF0228 family.

This Methanosarcina acetivorans (strain ATCC 35395 / DSM 2834 / JCM 12185 / C2A) protein is UPF0228 protein MA_4223.